Here is a 188-residue protein sequence, read N- to C-terminus: Threonylcarbamoyl-AMP synthase (188 aa).

The YrdC-like domain maps to 3–188 (QLHPSEIKDI…RSGKILRNGQ (186 aa)).

The protein belongs to the SUA5 family. TsaC subfamily.

The protein localises to the cytoplasm. The catalysed reaction is L-threonine + hydrogencarbonate + ATP = L-threonylcarbamoyladenylate + diphosphate + H2O. Its function is as follows. Required for the formation of a threonylcarbamoyl group on adenosine at position 37 (t(6)A37) in tRNAs that read codons beginning with adenine. Catalyzes the conversion of L-threonine, HCO(3)(-)/CO(2) and ATP to give threonylcarbamoyl-AMP (TC-AMP) as the acyladenylate intermediate, with the release of diphosphate. The polypeptide is Threonylcarbamoyl-AMP synthase (Shewanella sp. (strain MR-4)).